A 322-amino-acid polypeptide reads, in one-letter code: DNA-directed RNA polymerase subunit alpha (322 aa).

An alpha N-terminal domain (alpha-NTD) region spans residues 1–229; that stretch reads MNFVNNLFTL…KYFDLIFSFI (229 aa). The tract at residues 244–322 is alpha C-terminal domain (alpha-CTD); that stretch reads NLNLKINSVY…NLNSKIEYDL (79 aa).

Belongs to the RNA polymerase alpha chain family. As to quaternary structure, homodimer. The RNAP catalytic core consists of 2 alpha, 1 beta, 1 beta' and 1 omega subunit. When a sigma factor is associated with the core the holoenzyme is formed, which can initiate transcription.

It catalyses the reaction RNA(n) + a ribonucleoside 5'-triphosphate = RNA(n+1) + diphosphate. DNA-dependent RNA polymerase catalyzes the transcription of DNA into RNA using the four ribonucleoside triphosphates as substrates. This Carsonella ruddii (strain PV) protein is DNA-directed RNA polymerase subunit alpha (rpoA).